Here is a 1195-residue protein sequence, read N- to C-terminus: Error-prone DNA polymerase (1195 aa).

The tract at residues 1163-1195 (ALNGDRRDTPDAPAQRHRHPRDVRILPPSRDFH) is disordered.

This sequence belongs to the DNA polymerase type-C family. DnaE2 subfamily.

The protein localises to the cytoplasm. The enzyme catalyses DNA(n) + a 2'-deoxyribonucleoside 5'-triphosphate = DNA(n+1) + diphosphate. Functionally, DNA polymerase involved in damage-induced mutagenesis and translesion synthesis (TLS). It is not the major replicative DNA polymerase. The protein is Error-prone DNA polymerase of Rhodopseudomonas palustris (strain ATCC BAA-98 / CGA009).